The following is a 1215-amino-acid chain: Zinc finger SWIM domain-containing protein 6 (1215 aa).

Disordered regions lie at residues 1–46 (MAER…RPGP) and 133–161 (AAGG…SPAA). 2 stretches are compositionally biased toward gly residues: residues 18-38 (PGGG…GGGY) and 133-155 (AAGG…GGGS). The SWIM-type zinc-finger motif lies at 246 to 283 (CNVAISFDRCKITSVTCSCGNKDIFYCAHVVALSLYRI).

Its function is as follows. involved in nervous system development, important for striatal morphology and motor regulation. This Homo sapiens (Human) protein is Zinc finger SWIM domain-containing protein 6.